We begin with the raw amino-acid sequence, 1710 residues long: Extracellular matrix protein A (1710 aa).

Residues 1–22 (MKISIFILLLFISSMVIISVNA) form the signal peptide. Cys-rich CT repeat units lie at residues 43–70 (NRWS…CDDE), 71–94 (NACT…VDDK), 95–117 (NPCT…CDDK), 118–141 (NACT…CDDN), 142–165 (NPCT…VDDN), 166–189 (NPCT…VDDL), 190–213 (NPCT…VDDN), 214–237 (NKCT…CDDN), 238–261 (NACT…CDDK), 262–285 (NPCT…VDDN), 286–309 (NPCT…VDDN), 310–333 (NQCT…TDDN), 334–357 (NPCT…VDDN), 358–381 (NKCT…TDDN), 382–405 (NACT…CDDK), 406–429 (KACT…CDDN), 430–453 (NPCT…VDDN), 454–477 (NPCT…VDDN), 478–501 (NKCT…TDDN), 502–525 (NACT…CDDK), 526–549 (KACT…CDDN), 550–573 (NPCT…VDDN), 574–597 (NPCT…VDDN), 598–621 (NKCT…TDDN), 622–645 (NACT…CDDS), 646–669 (NPCT…VDDN), 670–693 (NPCT…VDDN), 694–717 (NKCT…TDDN), 718–741 (NACT…CDDK), 742–765 (KACT…CDDN), 766–789 (NPCT…VDDN), 790–813 (NPCT…VDDN), 814–837 (NKCT…TDDN), 838–861 (NACT…CDDN), 862–885 (NKCT…CDDS), 886–909 (NPCT…VDDN), 910–933 (NPCT…VDDN), 934–957 (NKCT…TDDN), 958–981 (NACT…TDDN), 982–1005 (NACT…CDDS), 1006–1029 (NPCT…VDDN), 1030–1053 (NPCT…VDDN), 1054–1077 (NKCT…TDDN), 1078–1101 (NACT…CDDS), 1102–1125 (NPCT…VDDN), 1126–1149 (NPCT…VDDN), 1150–1173 (NKCT…CDDN), 1174–1197 (NACT…CDDR), 1198–1221 (NPCT…TDDS), 1222–1245 (NKCT…CDDN), 1246–1269 (NACT…CDDK), 1270–1293 (NPCT…VDDN), 1294–1317 (DKCT…CDDN), 1318–1341 (NACT…CDDS), 1342–1365 (NPCT…VDDN), 1366–1389 (NPCT…VDDN), 1390–1413 (NKCT…CDDN), 1414–1437 (NPCT…VDDN), 1438–1461 (DACT…TDDN), 1462–1485 (NKCT…CDDG), 1486–1509 (NKCT…CPKP), 1511–1534 (DKCS…CTSD), 1558–1581 (NKCQ…CDDG), 1582–1606 (NACT…LPKN), 1608–1632 (NKCI…CECD), and 1658–1682 (NPKT…VITS). N-linked (GlcNAc...) asparagine glycosylation is found at asparagine 150 and asparagine 151. Residues asparagine 270 and asparagine 271 are each glycosylated (N-linked (GlcNAc...) asparagine). Residue asparagine 415 is glycosylated (N-linked (GlcNAc...) asparagine). A glycan (N-linked (GlcNAc...) asparagine) is linked at asparagine 535. Residue asparagine 655 is glycosylated (N-linked (GlcNAc...) asparagine). Asparagine 751 carries an N-linked (GlcNAc...) asparagine glycan. Asparagine 871, asparagine 894, and asparagine 895 each carry an N-linked (GlcNAc...) asparagine glycan. Residue asparagine 1015 is glycosylated (N-linked (GlcNAc...) asparagine). Residues asparagine 1110 and asparagine 1111 are each glycosylated (N-linked (GlcNAc...) asparagine). The N-linked (GlcNAc...) asparagine glycan is linked to asparagine 1183. Asparagine 1255 is a glycosylation site (N-linked (GlcNAc...) asparagine). N-linked (GlcNAc...) asparagine glycosylation occurs at asparagine 1351. An N-linked (GlcNAc...) asparagine glycan is attached at asparagine 1530. The N-linked (GlcNAc...) asparagine glycan is linked to asparagine 1624.

It is found in the secreted. The protein is Extracellular matrix protein A (ecmA) of Dictyostelium discoideum (Social amoeba).